Reading from the N-terminus, the 242-residue chain is Large ribosomal subunit protein uL1 (242 aa).

It belongs to the universal ribosomal protein uL1 family. Part of the 50S ribosomal subunit.

Binds directly to 23S rRNA. The L1 stalk is quite mobile in the ribosome, and is involved in E site tRNA release. In terms of biological role, protein L1 is also a translational repressor protein, it controls the translation of the L11 operon by binding to its mRNA. This is Large ribosomal subunit protein uL1 from Wigglesworthia glossinidia brevipalpis.